The sequence spans 391 residues: Ectodysplasin-A (391 aa).

Basic and acidic residues predominate over residues 1-21 (MGYPEVERREPLPAAAPRERG). Residues 1–28 (MGYPEVERREPLPAAAPRERGSQGCGCR) are disordered. At 1–41 (MGYPEVERREPLPAAAPRERGSQGCGCRGAPARAGEGNSCR) the chain is on the cytoplasmic side. The helical; Signal-anchor for type II membrane protein transmembrane segment at 42–62 (LFLGFFGLSLALHLLTLCCYL) threads the bilayer. Residues 63–391 (ELRSELRRER…AIRLGEAPAS (329 aa)) are Extracellular-facing. 2 disordered regions span residues 73–130 (GAES…SQDG) and 145–245 (SYSE…GTRE). Residues 76–96 (SRFSGPGTPGTSGTLSSPGGL) show a composition bias toward low complexity. In terms of domain architecture, Collagen-like spans 180–229 (GPPGPNGPPGPPGPPGPQGPPGIPGIPGIPGTTVMGPPGPPGPPGPQGPP). Composition is skewed to pro residues over residues 181 to 203 (PPGP…PGIP) and 216 to 228 (PPGP…PQGP). The 137-residue stretch at 249 to 385 (AVVHLQGQGS…HTTFFGAIRL (137 aa)) folds into the THD domain. Asn313 carries N-linked (GlcNAc...) asparagine glycosylation. Residues Cys332 and Cys346 are joined by a disulfide bond. A glycan (N-linked (GlcNAc...) asparagine) is linked at Asn372.

The protein belongs to the tumor necrosis factor family. In terms of assembly, homotrimer. The homotrimers may then dimerize and form higher-order oligomers. Post-translationally, N-glycosylated. In terms of processing, processing by furin produces a secreted form.

It is found in the cell membrane. The protein resides in the secreted. Cytokine which is involved in epithelial-mesenchymal signaling during morphogenesis of ectodermal organs. Functions as a ligand activating the DEATH-domain containing receptors EDAR and EDA2R. Isoform A1 binds only to the receptor EDAR, while isoform A2 binds exclusively to the receptor EDA2R. May also play a role in cell adhesion. In terms of biological role, isoform A1 binds only to the receptor EDAR, while isoform A2 binds exclusively to the receptor EDA2R. Functionally, isoform A2 binds exclusively to the receptor EDA2R. The polypeptide is Ectodysplasin-A (EDA) (Bos taurus (Bovine)).